The following is a 394-amino-acid chain: Aromatic-amino-acid aminotransferase (394 aa).

Substrate-binding residues include Gly34, Tyr65, Trp127, and Asn180. An N6-(pyridoxal phosphate)lysine modification is found at Lys243. Arg371 contacts substrate.

This sequence belongs to the class-I pyridoxal-phosphate-dependent aminotransferase family. As to quaternary structure, homodimer. The cofactor is pyridoxal 5'-phosphate.

It localises to the cytoplasm. The catalysed reaction is an aromatic L-alpha-amino acid + 2-oxoglutarate = an aromatic oxo-acid + L-glutamate. Functionally, shows activities toward both dicarboxylic and aromatic substrates. This Paracoccus denitrificans protein is Aromatic-amino-acid aminotransferase (tyrB).